The following is a 514-amino-acid chain: Histidine ammonia-lyase (514 aa).

Positions 144–146 form a cross-link, 5-imidazolinone (Ala-Gly); it reads ASG. The residue at position 145 (serine 145) is a 2,3-didehydroalanine (Ser).

Belongs to the PAL/histidase family. Contains an active site 4-methylidene-imidazol-5-one (MIO), which is formed autocatalytically by cyclization and dehydration of residues Ala-Ser-Gly.

It is found in the cytoplasm. The enzyme catalyses L-histidine = trans-urocanate + NH4(+). Its pathway is amino-acid degradation; L-histidine degradation into L-glutamate; N-formimidoyl-L-glutamate from L-histidine: step 1/3. This Rhodospirillum rubrum (strain ATCC 11170 / ATH 1.1.1 / DSM 467 / LMG 4362 / NCIMB 8255 / S1) protein is Histidine ammonia-lyase.